A 344-amino-acid chain; its full sequence is 4-hydroxy-2-oxovalerate aldolase (344 aa).

The region spanning V8–M260 is the Pyruvate carboxyltransferase domain. Residue R16–D17 coordinates substrate. A Mn(2+)-binding site is contributed by D17. Catalysis depends on H20, which acts as the Proton acceptor. Substrate is bound by residues S170 and H199. Residues H199 and H201 each coordinate Mn(2+). Residue Y290 participates in substrate binding.

The protein belongs to the 4-hydroxy-2-oxovalerate aldolase family.

The enzyme catalyses (S)-4-hydroxy-2-oxopentanoate = acetaldehyde + pyruvate. This chain is 4-hydroxy-2-oxovalerate aldolase (mhpE), found in Pseudoalteromonas translucida (strain TAC 125).